Consider the following 424-residue polypeptide: Serine--tRNA ligase (424 aa).

230–232 (TAE) provides a ligand contact to L-serine. 261 to 263 (RAE) lines the ATP pocket. Residue Glu284 coordinates L-serine. 348–351 (EISS) lines the ATP pocket. Ser384 contributes to the L-serine binding site.

The protein belongs to the class-II aminoacyl-tRNA synthetase family. Type-1 seryl-tRNA synthetase subfamily. As to quaternary structure, homodimer. The tRNA molecule binds across the dimer.

The protein resides in the cytoplasm. It catalyses the reaction tRNA(Ser) + L-serine + ATP = L-seryl-tRNA(Ser) + AMP + diphosphate + H(+). It carries out the reaction tRNA(Sec) + L-serine + ATP = L-seryl-tRNA(Sec) + AMP + diphosphate + H(+). Its pathway is aminoacyl-tRNA biosynthesis; selenocysteinyl-tRNA(Sec) biosynthesis; L-seryl-tRNA(Sec) from L-serine and tRNA(Sec): step 1/1. In terms of biological role, catalyzes the attachment of serine to tRNA(Ser). Is also able to aminoacylate tRNA(Sec) with serine, to form the misacylated tRNA L-seryl-tRNA(Sec), which will be further converted into selenocysteinyl-tRNA(Sec). This Carboxydothermus hydrogenoformans (strain ATCC BAA-161 / DSM 6008 / Z-2901) protein is Serine--tRNA ligase.